We begin with the raw amino-acid sequence, 424 residues long: Virion nicking-joining enzyme (424 aa).

2 PLD phosphodiesterase domains span residues 110–137 and 320–346; these read LGGV…DWRS and YSRV…TGNY.

The protein belongs to the orthopoxvirus OPG042 family.

The protein localises to the virion. Its function is as follows. DNA nicking enzyme that cleaves extruded cruciform DNA at its tip. Probably nicks viral hairpins. This chain is Virion nicking-joining enzyme (OPG042), found in Homo sapiens (Human).